The chain runs to 485 residues: Probable high-affinity nitrate transporter 2.4 (485 aa).

Transmembrane regions (helical) follow at residues 56 to 76 (WMSLFACFFAAFAAPPILPAM), 80 to 100 (LVLAPSDASAAAVASLSATLV), 119 to 139 (GVASLVCALALALAAVFASSP), 147 to 167 (FVAGLSLANFVANQHWMSRIF), 177 to 197 (AVAAGWANVGSAAAQVVMPVA), 215 to 235 (VTYLLPCAMLVTTGLAVLAFP), 270 to 290 (AWLLGLTYGHCYGVELIMENV), 305 to 327 (AAGAAAACFGAMNAVARPAGGVA), 341 to 361 (LWALWAVQSAGAALCVLVGRM), 377 to 397 (VACAAFVQAASGLTFGIVPFV), 405 to 425 (VSGMTASGGAVGAIVTNRLFF), and 435 to 455 (AISCTGITSLLCTLPVALIHF).

The protein belongs to the major facilitator superfamily. Nitrate/nitrite porter (TC 2.A.1.8) family. Expressed in the base of the lateral root primordia, root-shoot junction zone, leaves, ends of the husk and vascular tissue of the anthers.

The protein localises to the cell membrane. Its function is as follows. Involved in nitrate transport. This chain is Probable high-affinity nitrate transporter 2.4 (NRT2.4), found in Oryza sativa subsp. japonica (Rice).